The following is a 542-amino-acid chain: Gamma-terpinene synthase 1 (542 aa).

Mn(2+)-binding residues include aspartate 295 and aspartate 299. A DDXXD motif motif is present at residues aspartate 295–aspartate 299. Homodimerization stretches follow at residues tyrosine 301 to leucine 307 and glutamate 373 to proline 410. Mn(2+)-binding residues include aspartate 439 and glutamate 447.

Belongs to the terpene synthase family. In terms of assembly, homodimer. Mn(2+) is required as a cofactor. The cofactor is Mg(2+). Mostly expressed in flowers and, to a lower extent, in leaves, especially in glandular trichomes.

It catalyses the reaction (2E)-geranyl diphosphate = gamma-terpinene + diphosphate. The catalysed reaction is (2E)-geranyl diphosphate = alpha-terpinene + diphosphate. It functions in the pathway secondary metabolite biosynthesis; terpenoid biosynthesis. Involved in the biosynthesis of phenolic monoterpenes natural products thymol and carvacrol which have a broad range of biological activities acting as antimicrobial compounds, insecticides, antioxidants and pharmaceutical agents. Monoterpene synthase which catalyzes the conversion of geranyl diphosphate (GPP) to gamma-terpinene and the minor products alpha-thujene, alpha-terpinene, myrcene, sabinene, (+)-R-limonene, alpha-pinene and alpha-phellandrene. In Thymus vulgaris (Thyme), this protein is Gamma-terpinene synthase 1.